The primary structure comprises 989 residues: MENGEIEGAADDGVPVPAPPNGRRYRPVGSSDRAVIQMTSMEPGSSSSTAVAAVSGITPQPPRNLTVDPSMQEDHTVSQGDSKLELFGFDSLVNILGLKSMTGEQIQAPSSPRDGEDVAITIGRPKETGPKFGTMMGVFVPCLQNILGIIYYIRFTWIVGMAGVWQSLVLVSFCGACTFLTGISLSAIATNGAMKGGGPYYLIGRALGPEVGVSIGLCFFLGNAVAGSMYVLGAVETFLDAVPSAGFFKESVTVVNNTLVNGTATASTATISTPSLHDLQVYGVIVTILLCFIVFGGVKIINKVAPAFLIPVLFSLLCIYLGVFIAPRHNAPKGITGLSITTFKDNWGSEYQRTNNAGVPDPNGSIYWDFNALVGLFFPAVTGIMAGSNRSASLKDTQRSIPIGTLSATLTTTAMYLFSVLLFGALATREELLTDRLLTATVAWPAPAVIYIGIILSTLGAALQSLTGAPRLLAAIANDDILPVLNYFKVSEGAEPHSATLFTAFICICCVVIGNLDLITPTITMFFLLCYAGVNLSCFLLDLLDAPSWRPRWKFHHWSLSLVGALLCVVIMFLISWSFTVVSLALASLIYYYVSLKGKAGDWGDGFKSAYFQLALRSLRSLGANQVHPKNWYPIPLIFCRPWGKLPENVPCHPKLADFANCMKKKGRGMSIFVSIIDGDYHELAEDAKTACRQLDTYIEYKRCEGVAEIIVAPSMSEGFRSIVQTMGLGNLKPNIIVMRYPEIWRRENLIQIPSTFVSIINDCIIANKAVVIVKGLDEWPNEYQRQYGTIDLYWIVRDGGLMLLLSQLLLTKETFESCKIQVFCIAEEDTDAEELKADVKKFLYDLRMHAEVIVVTMKSWEPHMESSSSGAPQDDSQEAYTSAQRRISTYLSEMKETAQREGHPLMEDGKQVVVNEQKIEKFLYTMFKLNSTILRYSRMAAVVLVSLPPPPLNHPAYFYMEYMDLLVENVPRMLIVRGYRRDVVTFFT.

A compositionally biased stretch (acidic residues) spans 1–10; the sequence is MENGEIEGAA. The segment at 1–29 is disordered; that stretch reads MENGEIEGAADDGVPVPAPPNGRRYRPVG. The Cytoplasmic portion of the chain corresponds to 1-132; the sequence is MENGEIEGAA…GRPKETGPKF (132 aa). Residues 133 to 153 traverse the membrane as a helical segment; that stretch reads GTMMGVFVPCLQNILGIIYYI. At 154-167 the chain is on the extracellular side; the sequence is RFTWIVGMAGVWQS. Residues 168–188 traverse the membrane as a helical segment; that stretch reads LVLVSFCGACTFLTGISLSAI. The Cytoplasmic segment spans residues 189 to 214; that stretch reads ATNGAMKGGGPYYLIGRALGPEVGVS. Residues 215-235 form a helical membrane-spanning segment; it reads IGLCFFLGNAVAGSMYVLGAV. At 236–280 the chain is on the extracellular side; sequence ETFLDAVPSAGFFKESVTVVNNTLVNGTATASTATISTPSLHDLQ. Residues N256 and N261 are each glycosylated (N-linked (GlcNAc...) asparagine). Residues 281–301 form a helical membrane-spanning segment; that stretch reads VYGVIVTILLCFIVFGGVKII. Residues 302–304 are Cytoplasmic-facing; it reads NKV. A helical membrane pass occupies residues 305-325; it reads APAFLIPVLFSLLCIYLGVFI. At 326–365 the chain is on the extracellular side; sequence APRHNAPKGITGLSITTFKDNWGSEYQRTNNAGVPDPNGS. A glycan (N-linked (GlcNAc...) asparagine) is linked at N363. A helical membrane pass occupies residues 366–386; the sequence is IYWDFNALVGLFFPAVTGIMA. Topologically, residues 387-405 are cytoplasmic; sequence GSNRSASLKDTQRSIPIGT. A helical transmembrane segment spans residues 406 to 426; sequence LSATLTTTAMYLFSVLLFGAL. Residues 427 to 441 are Extracellular-facing; that stretch reads ATREELLTDRLLTAT. Residues 442–462 form a helical membrane-spanning segment; that stretch reads VAWPAPAVIYIGIILSTLGAA. Residues 463-498 lie on the Cytoplasmic side of the membrane; it reads LQSLTGAPRLLAAIANDDILPVLNYFKVSEGAEPHS. The chain crosses the membrane as a helical span at residues 499 to 519; the sequence is ATLFTAFICICCVVIGNLDLI. Over 520–522 the chain is Extracellular; the sequence is TPT. Residues 523–543 form a helical membrane-spanning segment; the sequence is ITMFFLLCYAGVNLSCFLLDL. Residues 544–551 are Cytoplasmic-facing; it reads LDAPSWRP. The helical transmembrane segment at 552 to 572 threads the bilayer; the sequence is RWKFHHWSLSLVGALLCVVIM. Residues 573 to 578 are Extracellular-facing; the sequence is FLISWS. The helical transmembrane segment at 579–599 threads the bilayer; it reads FTVVSLALASLIYYYVSLKGK. At 600–989 the chain is on the cytoplasmic side; sequence AGDWGDGFKS…YRRDVVTFFT (390 aa).

This sequence belongs to the SLC12A transporter family. In terms of tissue distribution, expressed in roots, stems and leaves with higher expression in root and leaf tips.

The protein resides in the membrane. Functionally, probable cation/chloride cotransporter that may mediate potassium-chloride cotransport. Involved in plant development and K(+) and Cl(-) homeostasis. May not be involved in sodium-chloride cotransport. The chain is Cation-chloride cotransporter 1 (CCC1) from Oryza sativa subsp. japonica (Rice).